The chain runs to 322 residues: Nitrilase (322 aa).

Residues 5-283 (VRVGAVQSEP…EAILTADIDL (279 aa)) enclose the CN hydrolase domain. The Proton acceptor role is filled by glutamate 45. Lysine 127 is a catalytic residue. Catalysis depends on cysteine 162, which acts as the Nucleophile.

This sequence belongs to the carbon-nitrogen hydrolase superfamily. Nitrilase family.

The catalysed reaction is a nitrile + 2 H2O = a carboxylate + NH4(+). Nitrilase that hydrolyzes preferentially 4-cyanopyridine. The polypeptide is Nitrilase (Talaromyces marneffei (strain ATCC 18224 / CBS 334.59 / QM 7333) (Penicillium marneffei)).